The chain runs to 147 residues: UPF0306 protein YhbP (147 aa).

Belongs to the UPF0306 family.

The protein is UPF0306 protein YhbP of Salmonella agona (strain SL483).